The primary structure comprises 108 residues: Integration host factor subunit alpha (108 aa).

The protein belongs to the bacterial histone-like protein family. Heterodimer of an alpha and a beta chain.

This protein is one of the two subunits of integration host factor, a specific DNA-binding protein that functions in genetic recombination as well as in transcriptional and translational control. This is Integration host factor subunit alpha from Methylorubrum populi (strain ATCC BAA-705 / NCIMB 13946 / BJ001) (Methylobacterium populi).